Consider the following 715-residue polypeptide: Protein psiH (715 aa).

The N-terminal stretch at 1 to 20 (MNYLKPTIFLILCLVTFVYS) is a signal peptide. Topologically, residues 21 to 651 (QPSTLTIQGT…ICKTGAVVST (631 aa)) are extracellular. Residues 115–256 (NYDSKKQVYV…YDYCGVCSGD (142 aa)) form the PA14 domain. N-linked (GlcNAc...) asparagine glycans are attached at residues Asn-149, Asn-377, Asn-528, and Asn-622. Residues 652–672 (AVIAGVTVAGAVALGVFIYGG) form a helical membrane-spanning segment. At 673-715 (KRGYDYWKESRNVQFSGSNSNPLYEQNPNGSGVNPLYNDNSAL) the chain is on the cytoplasmic side. Positions 690 to 715 (SNSNPLYEQNPNGSGVNPLYNDNSAL) are disordered.

This sequence belongs to the prespore-cell-inducing factor family.

The protein resides in the membrane. In Dictyostelium discoideum (Social amoeba), this protein is Protein psiH (psiH).